Reading from the N-terminus, the 248-residue chain is 2,3-bisphosphoglycerate-dependent phosphoglycerate mutase (248 aa).

Substrate is bound by residues 8–15 (RHGESEWN), 21–22 (TG), Arg-60, 87–90 (ERHY), Lys-98, 114–115 (RR), and 183–184 (GN). The Tele-phosphohistidine intermediate role is filled by His-9. The Proton donor/acceptor role is filled by Glu-87.

It belongs to the phosphoglycerate mutase family. BPG-dependent PGAM subfamily.

It catalyses the reaction (2R)-2-phosphoglycerate = (2R)-3-phosphoglycerate. It functions in the pathway carbohydrate degradation; glycolysis; pyruvate from D-glyceraldehyde 3-phosphate: step 3/5. In terms of biological role, catalyzes the interconversion of 2-phosphoglycerate and 3-phosphoglycerate. This chain is 2,3-bisphosphoglycerate-dependent phosphoglycerate mutase, found in Borreliella afzelii (strain PKo) (Borrelia afzelii).